The primary structure comprises 60 residues: Large ribosomal subunit protein uL30 (60 aa).

This sequence belongs to the universal ribosomal protein uL30 family. Part of the 50S ribosomal subunit.

In Symbiobacterium thermophilum (strain DSM 24528 / JCM 14929 / IAM 14863 / T), this protein is Large ribosomal subunit protein uL30.